A 643-amino-acid chain; its full sequence is Zinc finger protein 23 (643 aa).

One can recognise a KRAB domain in the interval 1–43; the sequence is MLENYGNVASLGFPLLKPAVISQLEGGSELGGSSPLAAGTGLQ. Lys-157 is covalently cross-linked (Glycyl lysine isopeptide (Lys-Gly) (interchain with G-Cter in SUMO2)). The C2H2-type 1; degenerate zinc finger occupies 168 to 190; sequence FKCEELVEPFRCDSQLIQHQENN. 16 C2H2-type zinc fingers span residues 196-218, 224-246, 252-274, 280-302, 308-330, 336-358, 364-386, 392-414, 420-442, 448-470, 476-498, 504-526, 532-554, 560-582, 588-610, and 616-638; these read YQCSECGKAFSINEKLIWHQRLH, FKCVECGKSFSYSSHYITHQTIH, YQCKMCGKAFSVNGSLSRHQRIH, YQCKECGNGFSCSSAYITHQRVH, YECNDCGKAFNVNAKLIQHQRIH, YECNECGKGFRCSSQLRQHQSIH, YQCKECGKGFNNNTKLIQHQRIH, YECTECGKAFSVKGKLIQHQRIH, YECNECGKAFRCNSQFRQHLRIH, YECNECGKAFSVNGKLMRHQRIH, FECNECGRCFTSKRNLLDHHRIH, YQCKECGKAFSINAKLTRHQRIH, FKCMECEKAFSCSSNYIVHQRIH, FQCKECGKAFHVNAHLIRHQRSH, FRCVECGKGFSFSSDYIIHQTVH, and YMCSVCGKAFRFSFQLSQHQSVH.

It belongs to the krueppel C2H2-type zinc-finger protein family.

The protein resides in the nucleus. May be involved in transcriptional regulation. May have a role in embryonic development. This chain is Zinc finger protein 23 (ZNF23), found in Homo sapiens (Human).